Here is a 94-residue protein sequence, read N- to C-terminus: Large ribosomal subunit protein bL27 (94 aa).

Residues 1-9 (MLRLDLQFF) constitute a propeptide that is removed on maturation.

The protein belongs to the bacterial ribosomal protein bL27 family. In terms of processing, the N-terminus is cleaved by ribosomal processing cysteine protease Prp.

This chain is Large ribosomal subunit protein bL27, found in Bacillus pumilus (strain SAFR-032).